A 122-amino-acid polypeptide reads, in one-letter code: Ribosome-binding factor A (122 aa).

The segment covering 95–111 has biased composition (basic and acidic residues); sequence PTVERVTRIQRTLREVS. The tract at residues 95 to 122 is disordered; it reads PTVERVTRIQRTLREVSGEDGDGNGTQE.

It belongs to the RbfA family. In terms of assembly, monomer. Binds 30S ribosomal subunits, but not 50S ribosomal subunits or 70S ribosomes.

It is found in the cytoplasm. One of several proteins that assist in the late maturation steps of the functional core of the 30S ribosomal subunit. Associates with free 30S ribosomal subunits (but not with 30S subunits that are part of 70S ribosomes or polysomes). Required for efficient processing of 16S rRNA. May interact with the 5'-terminal helix region of 16S rRNA. This is Ribosome-binding factor A from Rubrobacter xylanophilus (strain DSM 9941 / JCM 11954 / NBRC 16129 / PRD-1).